The chain runs to 85 residues: U5-theraphotoxin-Hhn1a (85 aa).

The signal sequence occupies residues 1–21 (MKSQIFFAVAALFLLTVRTYA). The propeptide occupies 22-49 (SKSKEQDLRDALFSAMFSADNQLNPQER). Cystine bridges form between cysteine 51/cysteine 65, cysteine 58/cysteine 70, and cysteine 64/cysteine 77.

It belongs to the neurotoxin 10 (Hwtx-1) family. 18 (Hntx-VII) subfamily. In terms of tissue distribution, expressed by the venom gland.

It is found in the secreted. Its function is as follows. Ion channel impairing toxin that inhibits voltage-gated sodium channels. The recombinantly expressed toxin shows a weak activity against Nav1.7/SCN9A, and shifts the voltage dependence of channel activation to more depolarized potentials. This Cyriopagopus hainanus (Chinese bird spider) protein is U5-theraphotoxin-Hhn1a.